The chain runs to 311 residues: Methionyl-tRNA formyltransferase (311 aa).

110 to 113 (SLLP) is a (6S)-5,6,7,8-tetrahydrofolate binding site.

This sequence belongs to the Fmt family.

It carries out the reaction L-methionyl-tRNA(fMet) + (6R)-10-formyltetrahydrofolate = N-formyl-L-methionyl-tRNA(fMet) + (6S)-5,6,7,8-tetrahydrofolate + H(+). Its function is as follows. Attaches a formyl group to the free amino group of methionyl-tRNA(fMet). The formyl group appears to play a dual role in the initiator identity of N-formylmethionyl-tRNA by promoting its recognition by IF2 and preventing the misappropriation of this tRNA by the elongation apparatus. The sequence is that of Methionyl-tRNA formyltransferase from Streptococcus pyogenes serotype M6 (strain ATCC BAA-946 / MGAS10394).